The following is a 561-amino-acid chain: Urocanate hydratase (561 aa).

NAD(+)-binding positions include 52–53 (GG), Gln130, 176–178 (GMG), Glu196, Arg201, 242–243 (NA), 263–267 (QTSAH), 273–274 (YL), and Tyr322. The active site involves Cys410. Gly492 contacts NAD(+).

The protein belongs to the urocanase family. The cofactor is NAD(+).

The protein resides in the cytoplasm. It catalyses the reaction 4-imidazolone-5-propanoate = trans-urocanate + H2O. The protein operates within amino-acid degradation; L-histidine degradation into L-glutamate; N-formimidoyl-L-glutamate from L-histidine: step 2/3. Functionally, catalyzes the conversion of urocanate to 4-imidazolone-5-propionate. The sequence is that of Urocanate hydratase from Salmonella choleraesuis (strain SC-B67).